The chain runs to 294 residues: Cytidine deaminase (294 aa).

2 CMP/dCMP-type deaminase domains span residues 48 to 168 (DEDA…FGPK) and 186 to 294 (LEGD…VLLG). Substrate is bound at residue 89–91 (NME). H102 contacts Zn(2+). The Proton donor role is filled by E104. Zn(2+) contacts are provided by C129 and C132.

It belongs to the cytidine and deoxycytidylate deaminase family. In terms of assembly, homodimer. Zn(2+) is required as a cofactor.

It carries out the reaction cytidine + H2O + H(+) = uridine + NH4(+). It catalyses the reaction 2'-deoxycytidine + H2O + H(+) = 2'-deoxyuridine + NH4(+). Its function is as follows. This enzyme scavenges exogenous and endogenous cytidine and 2'-deoxycytidine for UMP synthesis. This chain is Cytidine deaminase, found in Citrobacter koseri (strain ATCC BAA-895 / CDC 4225-83 / SGSC4696).